A 501-amino-acid chain; its full sequence is DNA nucleotidylexotransferase (501 aa).

A Nuclear localization signal motif is present at residues 11 to 17 (KKRKRPV). Positions 24-121 (QVEVKFKEVT…RPVRVETRHS (98 aa)) constitute a BRCT domain. An involved in DNA binding region spans residues 249–253 (VGPKT). A 2'-deoxyribonucleoside 5'-triphosphate is bound by residues 324–329 (GFRRGK) and 333–336 (HDVD). Residues aspartate 334, aspartate 336, and aspartate 426 each contribute to the Mg(2+) site. 441–442 (GW) serves as a coordination point for a 2'-deoxyribonucleoside 5'-triphosphate.

Belongs to the DNA polymerase type-X family. Mg(2+) serves as cofactor.

It is found in the nucleus. The catalysed reaction is DNA(n) + a 2'-deoxyribonucleoside 5'-triphosphate = DNA(n+1) + diphosphate. Functionally, template-independent DNA polymerase which catalyzes the random addition of deoxynucleoside 5'-triphosphate to the 3'-end of a DNA initiator. One of the in vivo functions of this enzyme is the addition of nucleotides at the junction (N region) of rearranged Ig heavy chain and T-cell receptor gene segments during the maturation of B- and T-cells. This Oncorhynchus mykiss (Rainbow trout) protein is DNA nucleotidylexotransferase (dntt).